We begin with the raw amino-acid sequence, 323 residues long: Transcriptional regulator protein Pur-beta-A (323 aa).

Disordered regions lie at residues 1–34 (MADG…QELA), 100–122 (SPEQ…PRRA), and 286–323 (QERQ…VDDD). The residue at position 2 (alanine 2) is an N-acetylalanine. Over residues 9-19 (ERGGSSGGPGG) the composition is skewed to gly residues. A compositionally biased stretch (basic and acidic residues) spans 24 to 34 (MSREQETQELA). Positions 27 to 257 (EQETQELATK…LRVSEVKPSY (231 aa)) are DNA-binding. Residues 286 to 305 (QERQRDKMYERRGPGDRERS) show a composition bias toward basic and acidic residues. Residues 313–323 (DDSETEDVDDD) show a composition bias toward acidic residues.

This sequence belongs to the PUR DNA-binding protein family.

It localises to the nucleus. Its function is as follows. Transcriptional regulator which can act as an activator or a repressor. This chain is Transcriptional regulator protein Pur-beta-A (purb-a), found in Xenopus laevis (African clawed frog).